The primary structure comprises 846 residues: Cap-specific mRNA (nucleoside-2'-O-)-methyltransferase 1 (846 aa).

The segment at 1 to 81 (MKRKSDSEQQ…LPDTLAEGSS (81 aa)) is disordered. A Bipartite nuclear localization signal motif is present at residues 2–20 (KRKSDSEQQPSVQCRKKKR). Over residues 27–45 (NLSSTSDDDTQYSNHGTQE) the composition is skewed to polar residues. In terms of domain architecture, G-patch spans 87–133 (YNSVSQKLMAKMGFREGEGLGKFGQGRKEIVETSKQKGRRGLGMVLK). Substrate is bound by residues 203-207 (KSAFD) and Arg218. The RrmJ-type SAM-dependent 2'-O-MTase domain occupies 231–450 (FFLNRAAMKM…ERYVVCRGLK (220 aa)). Residue Asn234 participates in S-adenosyl-L-methionine binding. Lys239 is an active-site residue. S-adenosyl-L-methionine contacts are provided by residues 277 to 283 (CAGPGGF) and 335 to 336 (DV). Asp364 is a catalytic residue. Position 374–376 (374–376 (NIQ)) interacts with substrate. Catalysis depends on Lys404, which acts as the Proton acceptor. Asn439 lines the substrate pocket. The region spanning 752-786 (KTINEPWSMAYSKSQKRKYFYNSKTKNSQFELPVE) is the WW domain.

The protein localises to the nucleus. It catalyses the reaction a 5'-end (N(7)-methyl 5'-triphosphoguanosine)-ribonucleoside in mRNA + S-adenosyl-L-methionine = a 5'-end (N(7)-methyl 5'-triphosphoguanosine)-(2'-O-methyl-ribonucleoside) in mRNA + S-adenosyl-L-homocysteine + H(+). S-adenosyl-L-methionine-dependent methyltransferase that mediates mRNA cap1 2'-O-ribose methylation to the 5'-cap structure of mRNAs. Methylates the ribose of the first nucleotide of a m(7)GpppG-capped mRNA and small nuclear RNA (snRNA) to produce m(7)GpppRm (cap1). Displays a preference for cap0 transcripts. Cap1 modification is linked to higher levels of translation. May be involved in the interferon response pathway. The protein is Cap-specific mRNA (nucleoside-2'-O-)-methyltransferase 1 (cmtr1) of Xenopus laevis (African clawed frog).